A 494-amino-acid chain; its full sequence is Guanosine-5'-triphosphate,3'-diphosphate pyrophosphatase (494 aa).

This sequence belongs to the GppA/Ppx family. GppA subfamily.

It carries out the reaction guanosine 3'-diphosphate 5'-triphosphate + H2O = guanosine 3',5'-bis(diphosphate) + phosphate + H(+). It participates in purine metabolism; ppGpp biosynthesis; ppGpp from GTP: step 2/2. Catalyzes the conversion of pppGpp to ppGpp. Guanosine pentaphosphate (pppGpp) is a cytoplasmic signaling molecule which together with ppGpp controls the 'stringent response', an adaptive process that allows bacteria to respond to amino acid starvation, resulting in the coordinated regulation of numerous cellular activities. The polypeptide is Guanosine-5'-triphosphate,3'-diphosphate pyrophosphatase (Citrobacter koseri (strain ATCC BAA-895 / CDC 4225-83 / SGSC4696)).